We begin with the raw amino-acid sequence, 89 residues long: Cell division topological specificity factor (89 aa).

The protein belongs to the MinE family.

Prevents the cell division inhibition by proteins MinC and MinD at internal division sites while permitting inhibition at polar sites. This ensures cell division at the proper site by restricting the formation of a division septum at the midpoint of the long axis of the cell. The sequence is that of Cell division topological specificity factor from Photorhabdus laumondii subsp. laumondii (strain DSM 15139 / CIP 105565 / TT01) (Photorhabdus luminescens subsp. laumondii).